The following is a 186-amino-acid chain: Ribosome-recycling factor (186 aa).

Belongs to the RRF family.

It is found in the cytoplasm. In terms of biological role, responsible for the release of ribosomes from messenger RNA at the termination of protein biosynthesis. May increase the efficiency of translation by recycling ribosomes from one round of translation to another. This Paraburkholderia phymatum (strain DSM 17167 / CIP 108236 / LMG 21445 / STM815) (Burkholderia phymatum) protein is Ribosome-recycling factor.